A 541-amino-acid chain; its full sequence is Phosphoenolpyruvate carboxykinase (ATP) (541 aa).

The substrate site is built by Arg-67, Tyr-207, and Lys-213. Residues Lys-213, His-232, and Gly-248–Thr-256 each bind ATP. Mn(2+) contacts are provided by Lys-213 and His-232. Mn(2+) is bound at residue Asp-269. Residues Glu-297, Arg-333, Arg-449 to Ile-450, and Thr-455 contribute to the ATP site. Arg-333 provides a ligand contact to substrate.

It belongs to the phosphoenolpyruvate carboxykinase (ATP) family. As to quaternary structure, monomer. Requires Mn(2+) as cofactor.

It is found in the cytoplasm. It catalyses the reaction oxaloacetate + ATP = phosphoenolpyruvate + ADP + CO2. The protein operates within carbohydrate biosynthesis; gluconeogenesis. Involved in the gluconeogenesis. Catalyzes the conversion of oxaloacetate (OAA) to phosphoenolpyruvate (PEP) through direct phosphoryl transfer between the nucleoside triphosphate and OAA. This is Phosphoenolpyruvate carboxykinase (ATP) from Vibrio atlanticus (strain LGP32) (Vibrio splendidus (strain Mel32)).